Here is a 377-residue protein sequence, read N- to C-terminus: 4-hydroxy-3-methylbut-2-en-1-yl diphosphate synthase (flavodoxin) (377 aa).

4 residues coordinate [4Fe-4S] cluster: C275, C278, C310, and E317.

It belongs to the IspG family. [4Fe-4S] cluster is required as a cofactor.

It carries out the reaction (2E)-4-hydroxy-3-methylbut-2-enyl diphosphate + oxidized [flavodoxin] + H2O + 2 H(+) = 2-C-methyl-D-erythritol 2,4-cyclic diphosphate + reduced [flavodoxin]. It functions in the pathway isoprenoid biosynthesis; isopentenyl diphosphate biosynthesis via DXP pathway; isopentenyl diphosphate from 1-deoxy-D-xylulose 5-phosphate: step 5/6. Functionally, converts 2C-methyl-D-erythritol 2,4-cyclodiphosphate (ME-2,4cPP) into 1-hydroxy-2-methyl-2-(E)-butenyl 4-diphosphate. This Jannaschia sp. (strain CCS1) protein is 4-hydroxy-3-methylbut-2-en-1-yl diphosphate synthase (flavodoxin).